We begin with the raw amino-acid sequence, 205 residues long: Mediator of RNA polymerase II transcription subunit 29 (205 aa).

A compositionally biased stretch (low complexity) spans 1 to 27 (MNPNMNMMQMSGPPMMQVSPMMQSSPQ). Residues 1–65 (MNPNMNMMQM…QQQQQQAEKL (65 aa)) are disordered. Positions 28–38 (PMMPTGPPGPV) are enriched in pro residues. Over residues 39–61 (PMQQQHQQQQQQQQQQQQQQQQQ) the composition is skewed to low complexity.

The protein belongs to the Mediator complex subunit 29 family. As to quaternary structure, component of the Mediator complex.

The protein resides in the nucleus. Functionally, component of the Mediator complex, a coactivator involved in the regulated transcription of nearly all RNA polymerase II-dependent genes. Mediator functions as a bridge to convey information from gene-specific regulatory proteins to the basal RNA polymerase II transcription machinery. Mediator is recruited to promoters by direct interactions with regulatory proteins and serves as a scaffold for the assembly of a functional preinitiation complex with RNA polymerase II and the general transcription factors. This Drosophila virilis (Fruit fly) protein is Mediator of RNA polymerase II transcription subunit 29 (ix).